The chain runs to 187 residues: MVYPVVEAESRVGFGKGFARRARAAGKIPAVAYGLKRAPEHVLLPAAQMSLIMRRANALLQLKIDARESLVLIKQVQRDRIRNIIEHLDMLFVNEDDAVTIRVPLRFVGQSYAGTVTSVENYSVAVTLQVSQIPEALVVDVSGLQAGRRIFASDIALPDGALLVSPPRLLIAKVDPVRRATQEPPPD.

It belongs to the bacterial ribosomal protein bL25 family. CTC subfamily. In terms of assembly, part of the 50S ribosomal subunit; part of the 5S rRNA/L5/L18/L25 subcomplex. Contacts the 5S rRNA. Binds to the 5S rRNA independently of L5 and L18.

Functionally, this is one of the proteins that binds to the 5S RNA in the ribosome where it forms part of the central protuberance. The protein is Large ribosomal subunit protein bL25 of Tropheryma whipplei (strain TW08/27) (Whipple's bacillus).